The sequence spans 346 residues: 2-oxoglutarate synthase subunit KorA (346 aa).

Heterotetramer of the KorA, KorB, KorC and KorD subunits.

The enzyme catalyses 2 oxidized [2Fe-2S]-[ferredoxin] + 2-oxoglutarate + CoA = succinyl-CoA + 2 reduced [2Fe-2S]-[ferredoxin] + CO2 + H(+). The protein is 2-oxoglutarate synthase subunit KorA (korA) of Archaeoglobus fulgidus (strain ATCC 49558 / DSM 4304 / JCM 9628 / NBRC 100126 / VC-16).